Consider the following 112-residue polypeptide: 2Fe-2S ferredoxin (112 aa).

Positions 5–107 (IKVTFIINDG…GIKVRLPSAT (103 aa)) constitute a 2Fe-2S ferredoxin-type domain. [2Fe-2S] cluster-binding residues include Cys42, Cys48, Cys51, and Cys88.

The protein belongs to the adrenodoxin/putidaredoxin family. [2Fe-2S] cluster is required as a cofactor.

Functionally, ferredoxin are iron-sulfur proteins that transfer electrons in a wide variety of metabolic reactions. In Rickettsia montanensis, this protein is 2Fe-2S ferredoxin (fdxB).